The chain runs to 296 residues: Heme oxygenase 1 (296 aa).

Topologically, residues 1–273 are cytoplasmic; sequence METSQPHNAE…RMQADMLTTS (273 aa). Lys21, His28, Tyr137, and Arg186 together coordinate heme b. The disordered stretch occupies residues 231–264; that stretch reads GHAVQPKAELRTRSVNKSHENSPAAGKESERTSR. Basic and acidic residues predominate over residues 238–250; sequence AELRTRSVNKSHE. Residues 274–296 traverse the membrane as a helical; Anchor for type IV membrane protein segment; that stretch reads PLVRWLLALGFIATTVAVGLFAM.

It belongs to the heme oxygenase family. Homodimer and higher order homooligomer. Oligomerization is crucial for its stability and function in the endoplasmic reticulum. Post-translationally, a soluble form arises by proteolytic removal of the membrane anchor.

It localises to the endoplasmic reticulum membrane. The enzyme catalyses heme b + 3 reduced [NADPH--hemoprotein reductase] + 3 O2 = biliverdin IXalpha + CO + Fe(2+) + 3 oxidized [NADPH--hemoprotein reductase] + 3 H2O + H(+). Inhibited by metalloporphyrins in the following order of decreasing potency: tin mesoporphyrin &gt; tin protoporphyrin &gt; zinc protoporphyrin &gt; manganese protoporphyrin &gt; cobalt protoporphyrin. Catalyzes the oxidative cleavage of heme at the alpha-methene bridge carbon, released as carbon monoxide (CO), to generate biliverdin IXalpha, while releasing the central heme iron chelate as ferrous iron. Affords protection against programmed cell death and this cytoprotective effect relies on its ability to catabolize free heme and prevent it from sensitizing cells to undergo apoptosis. In terms of biological role, catalyzes the oxidative cleavage of heme at the alpha-methene bridge carbon, released as carbon monoxide (CO), to generate biliverdin IXalpha, while releasing the central heme iron chelate as ferrous iron. In Gallus gallus (Chicken), this protein is Heme oxygenase 1 (HMOX1).